Consider the following 151-residue polypeptide: Small ribosomal subunit protein uS15 (151 aa).

It belongs to the universal ribosomal protein uS15 family.

This Lumbricus rubellus (Humus earthworm) protein is Small ribosomal subunit protein uS15 (RPS13).